The primary structure comprises 231 residues: Ion-translocating oxidoreductase complex subunit E (231 aa).

Helical transmembrane passes span 18 to 38 (GLVQ…LTNA), 39 to 59 (LGLG…VSLV), 69 to 89 (IPVF…FINA), 93 to 113 (GLYL…VIIG), 127 to 147 (STFD…VLGA), and 182 to 202 (TFLL…LIAL).

This sequence belongs to the NqrDE/RnfAE family. The complex is composed of six subunits: RnfA, RnfB, RnfC, RnfD, RnfE and RnfG.

It localises to the cell inner membrane. Its function is as follows. Part of a membrane-bound complex that couples electron transfer with translocation of ions across the membrane. In Shewanella piezotolerans (strain WP3 / JCM 13877), this protein is Ion-translocating oxidoreductase complex subunit E.